A 734-amino-acid chain; its full sequence is Photosystem I P700 chlorophyll a apoprotein A2 (734 aa).

Helical transmembrane passes span Ile46–Ala69, Leu135–Gln158, Leu175–Ile199, Ile273–Tyr291, Ile330–Tyr353, Ala369–Ile395, Ala417–His439, and Phe517–Val535. The [4Fe-4S] cluster site is built by Cys559 and Cys568. A run of 2 helical transmembrane segments spans residues Ala575–Trp596 and Leu643–Ile665. His654, Met662, and Tyr670 together coordinate chlorophyll a. Trp671 contributes to the phylloquinone binding site. Residues Leu707–Ala727 traverse the membrane as a helical segment.

This sequence belongs to the PsaA/PsaB family. The PsaA/B heterodimer binds the P700 chlorophyll special pair and subsequent electron acceptors. PSI consists of a core antenna complex that captures photons, and an electron transfer chain that converts photonic excitation into a charge separation. The eukaryotic PSI reaction center is composed of at least 11 subunits. It depends on P700 is a chlorophyll a/chlorophyll a' dimer, A0 is one or more chlorophyll a, A1 is one or both phylloquinones and FX is a shared 4Fe-4S iron-sulfur center. as a cofactor.

The protein resides in the plastid. Its subcellular location is the chloroplast thylakoid membrane. The enzyme catalyses reduced [plastocyanin] + hnu + oxidized [2Fe-2S]-[ferredoxin] = oxidized [plastocyanin] + reduced [2Fe-2S]-[ferredoxin]. PsaA and PsaB bind P700, the primary electron donor of photosystem I (PSI), as well as the electron acceptors A0, A1 and FX. PSI is a plastocyanin-ferredoxin oxidoreductase, converting photonic excitation into a charge separation, which transfers an electron from the donor P700 chlorophyll pair to the spectroscopically characterized acceptors A0, A1, FX, FA and FB in turn. Oxidized P700 is reduced on the lumenal side of the thylakoid membrane by plastocyanin. The polypeptide is Photosystem I P700 chlorophyll a apoprotein A2 (Drimys granadensis).